The chain runs to 457 residues: UDP-N-acetylmuramate--L-alanine ligase (457 aa).

109-115 provides a ligand contact to ATP; the sequence is GTDGKTT.

Belongs to the MurCDEF family.

The protein resides in the cytoplasm. The catalysed reaction is UDP-N-acetyl-alpha-D-muramate + L-alanine + ATP = UDP-N-acetyl-alpha-D-muramoyl-L-alanine + ADP + phosphate + H(+). Its pathway is cell wall biogenesis; peptidoglycan biosynthesis. Functionally, cell wall formation. This Thermotoga maritima (strain ATCC 43589 / DSM 3109 / JCM 10099 / NBRC 100826 / MSB8) protein is UDP-N-acetylmuramate--L-alanine ligase (murC).